The chain runs to 802 residues: Lon protease (802 aa).

Positions 21-215 (LPLLPVRDII…KIIQILNAEI (195 aa)) constitute a Lon N-terminal domain. 367–374 (GPPGVGKT) provides a ligand contact to ATP. Residues 603–784 (ENDVGVATGL…DEVISLTIER (182 aa)) form the Lon proteolytic domain. Catalysis depends on residues Ser690 and Lys733.

Belongs to the peptidase S16 family. Homohexamer. Organized in a ring with a central cavity.

The protein resides in the cytoplasm. The catalysed reaction is Hydrolysis of proteins in presence of ATP.. In terms of biological role, ATP-dependent serine protease that mediates the selective degradation of mutant and abnormal proteins as well as certain short-lived regulatory proteins. Required for cellular homeostasis and for survival from DNA damage and developmental changes induced by stress. Degrades polypeptides processively to yield small peptide fragments that are 5 to 10 amino acids long. Binds to DNA in a double-stranded, site-specific manner. This Endomicrobium trichonymphae protein is Lon protease.